The following is a 193-amino-acid chain: uncharacterized protein (193 aa).

A disordered region spans residues 1 to 144 (MEKKRTLSVN…NNNNNNEGTI (144 aa)). The span at 29–86 (NSLNNIENNECNNNNNNNNNNNNNNSNSNNLNNSNNNNINTSSNSINSSNSINNSIDN) shows a compositional bias: low complexity. Residues 103 to 118 (KMNSSQEFQSYLTPNK) show a composition bias toward polar residues. Residues 119 to 140 (NNNNRNNNNRNNNNNNNNNNNN) are compositionally biased toward low complexity. Residues 158–180 (YMIRPFLVGASASFGISIGMFYF) form a helical membrane-spanning segment.

The protein resides in the membrane. This is an uncharacterized protein from Dictyostelium discoideum (Social amoeba).